The following is a 363-amino-acid chain: Aminomethyltransferase (363 aa).

The protein belongs to the GcvT family. The glycine cleavage system is composed of four proteins: P, T, L and H.

The catalysed reaction is N(6)-[(R)-S(8)-aminomethyldihydrolipoyl]-L-lysyl-[protein] + (6S)-5,6,7,8-tetrahydrofolate = N(6)-[(R)-dihydrolipoyl]-L-lysyl-[protein] + (6R)-5,10-methylene-5,6,7,8-tetrahydrofolate + NH4(+). Functionally, the glycine cleavage system catalyzes the degradation of glycine. This Thioalkalivibrio sulfidiphilus (strain HL-EbGR7) protein is Aminomethyltransferase.